We begin with the raw amino-acid sequence, 242 residues long: Probable transcriptional regulatory protein lhv_0777 (242 aa).

A disordered region spans residues 1-22 (MSGHSKWHNIQGRKNAQDAKRG).

This sequence belongs to the TACO1 family.

It localises to the cytoplasm. In Lactobacillus helveticus (strain DPC 4571), this protein is Probable transcriptional regulatory protein lhv_0777.